The following is a 147-amino-acid chain: Cytochrome c-type biogenesis protein CcmE (147 aa).

Residues 1–7 (MTVRQRR) lie on the Cytoplasmic side of the membrane. The helical; Signal-anchor for type II membrane protein transmembrane segment at 8–28 (FAMVILVVIGVSIATGLGLKA) threads the bilayer. Topologically, residues 29 to 147 (FQENILFFYN…KTKANTEDKL (119 aa)) are periplasmic. The heme site is built by histidine 123 and tyrosine 127.

It belongs to the CcmE/CycJ family.

Its subcellular location is the cell inner membrane. Its function is as follows. Heme chaperone required for the biogenesis of c-type cytochromes. Transiently binds heme delivered by CcmC and transfers the heme to apo-cytochromes in a process facilitated by CcmF and CcmH. The polypeptide is Cytochrome c-type biogenesis protein CcmE (Nitrosococcus oceani (strain ATCC 19707 / BCRC 17464 / JCM 30415 / NCIMB 11848 / C-107)).